The primary structure comprises 357 residues: Fructose-bisphosphate aldolase (357 aa).

Residues arginine 49 and lysine 140 each contribute to the substrate site. Glutamate 183 acts as the Proton acceptor in catalysis. Residue lysine 225 is the Schiff-base intermediate with dihydroxyacetone-P of the active site.

This sequence belongs to the class I fructose-bisphosphate aldolase family.

It catalyses the reaction beta-D-fructose 1,6-bisphosphate = D-glyceraldehyde 3-phosphate + dihydroxyacetone phosphate. The protein operates within carbohydrate degradation; glycolysis; D-glyceraldehyde 3-phosphate and glycerone phosphate from D-glucose: step 4/4. The protein is Fructose-bisphosphate aldolase (fba) of Dictyostelium discoideum (Social amoeba).